A 353-amino-acid polypeptide reads, in one-letter code: Diacetylchitobiose uptake system permease protein NgcF (353 aa).

Residues 1–24 (MKDTIPTAETASRRPEPAARGGRP) form a disordered region. 6 helical membrane passes run 36–56 (FFLA…LIPF), 100–120 (LLAA…AVAI), 141–161 (IISF…WAQM), 197–217 (VMFV…IAAI), 254–274 (AYIY…AMVP), and 303–323 (TAMG…VFLV). The region spanning 95-320 (LRNVALLAAF…AVTLVFAALV (226 aa)) is the ABC transmembrane type-1 domain. Residues 329–353 (GGEGESKRKAPGSRARRAAAKGGAR) form a disordered region. Over residues 337 to 353 (KAPGSRARRAAAKGGAR) the composition is skewed to basic residues.

Belongs to the binding-protein-dependent transport system permease family. In terms of assembly, the complex is composed of two ATP-binding proteins (MsiK), two transmembrane proteins (NgcF and NgcG) and a solute-binding protein (NgcE).

It localises to the cell membrane. Its function is as follows. Part of the ABC transporter complex NgcEFG-MsiK involved in N,N'-diacetylchitobiose ((GlcNAc)2) uptake. Responsible for the translocation of the substrate across the membrane. The sequence is that of Diacetylchitobiose uptake system permease protein NgcF from Streptomyces coelicolor (strain ATCC BAA-471 / A3(2) / M145).